A 528-amino-acid chain; its full sequence is MFSKYLQSRVCGLHSFTNSSAQQLFSKSIAHSSRRNFVISSSCTKFRNVAIQRNAKREFSRCAALKNFSYHARCFHATRAVWEMTDPYKTLGVSKSASASEIKSAYYKLAKQYHPDANPDKAAQDKFVEIKQAYEVLQDPKKKKAFDTYGAGAFKNGEFTGGDFEGFQNGFAGASSFSSGFPGFNFEDLFGFSSRGPQARRNTSFDVFVGEDIEASITIDFMEAVRGAKKDLSYSVSSTCSSCHGSGLQPGSHKSTCFACKGTGQRLHFIPPSFHMQTTCDSCGGTGTTIPPNSACRSCMGSGTVRERKTVSIDIPPGIDDNTVLRVMGAGNDASTAKGGPNAKSRPGDLFATIHVRKHPFFVREGTNVTYNAKIPMTTAALGGTLRVPTLTGNVDLRVSPGTSTGDRITMAGKGIRKVNTSRYGNFYVNFEVTIPKILSPHERSLLEQLADALNDSTARRTQSSPSGTNSSTSTSSTSSKHSTGISTEPTTGEENKQDGSVGGFFKRAFRRLHPDEDQNPKKDESSS.

Residues Met-1–Lys-66 constitute a mitochondrion transit peptide. Residues Asp-86–Gly-150 enclose the J domain. A CR-type zinc finger spans residues Gly-227 to Arg-308. CXXCXGXG motif repeat units follow at residues Cys-240–Gly-247, Cys-257–Gly-264, Cys-280–Gly-287, and Cys-296–Gly-303. Residues Asn-455–Ser-528 are disordered. Positions Thr-462–Thr-488 are enriched in low complexity. Residues Leu-513–Ser-528 show a composition bias toward basic and acidic residues.

The protein localises to the mitochondrion. The protein is DnaJ homolog 1, mitochondrial (mdj1) of Schizosaccharomyces pombe (strain 972 / ATCC 24843) (Fission yeast).